The chain runs to 375 residues: Adiponectin receptor protein 1 (375 aa).

The tract at residues 1–60 (MSSHKGSVVAQGNGAPASNREADTVELAELGPLLEEKGKRVIANPPKAEEEQTCPVPQEE) is disordered. The Cytoplasmic segment spans residues 1–136 (MSSHKGSVVA…SIFRIHTETG (136 aa)). The helical transmembrane segment at 137–157 (NIWTHLLGFVLFLFLGILTML) threads the bilayer. Residues 158 to 170 (RPNMYFMAPLQEK) are Extracellular-facing. Residues 171 to 191 (VVFGMFFLGAVLCLSFSWLFH) form a helical membrane-spanning segment. Residue H191 coordinates Zn(2+). Topologically, residues 192 to 203 (TVYCHSEKVSRT) are cytoplasmic. The helical transmembrane segment at 204-224 (FSKLDYSGIALLIMGSFVPWL) threads the bilayer. Topologically, residues 225-234 (YYSFYCSPQP) are extracellular. The helical transmembrane segment at 235–255 (RLIYLSIVCVLGISAIIVAQW) threads the bilayer. The Cytoplasmic segment spans residues 256 to 264 (DRFATPKHR). A helical membrane pass occupies residues 265 to 285 (QTRAGVFLGLGLSGVVPTMHF). Residues 286 to 298 (TIAEGFVKATTVG) lie on the Extracellular side of the membrane. A helical transmembrane segment spans residues 299-319 (QMGWFFLMAVMYITGAGLYAA). The Cytoplasmic portion of the chain corresponds to 320–337 (RIPERFFPGKFDIWFQSH). H337 and H341 together coordinate Zn(2+). Residues 338–358 (QIFHVLVVAAAFVHFYGVSNL) form a helical membrane-spanning segment. The Extracellular portion of the chain corresponds to 359-375 (QEFRYGLEGGCTDDTLL).

It belongs to the ADIPOR family. As to quaternary structure, may form homooligomers and heterooligomers with ADIPOR2. Interacts with APPL2 (via BAR domain); hinders the accessibility of APPL1 to ADIPOR1; negatively regulates adiponectin signaling; ADIPOQ dissociates this interaction and facilitates the recruitment of APPL1 to ADIPOR1. Interacts with APPL1; ADIPOQ enhances this interaction; inhibites adiponectin-stimulated binding of APPL2 to ADIPOR1. As to expression, widely expressed. Highly expressed in heart and skeletal muscle. Expressed at intermediate level in brain, spleen, kidney, liver, placenta, lung and peripheral blood leukocytes. Weakly expressed in colon, thymus and small intestine.

It is found in the cell membrane. Functionally, receptor for ADIPOQ, an essential hormone secreted by adipocytes that regulates glucose and lipid metabolism. Required for normal glucose and fat homeostasis and for maintaining a normal body weight. ADIPOQ-binding activates a signaling cascade that leads to increased AMPK activity, and ultimately to increased fatty acid oxidation, increased glucose uptake and decreased gluconeogenesis. Has high affinity for globular adiponectin and low affinity for full-length adiponectin. In Homo sapiens (Human), this protein is Adiponectin receptor protein 1.